A 347-amino-acid polypeptide reads, in one-letter code: GMP reductase (347 aa).

Residue 108-131 (ADFQKTKDIMAISDEFIFICIDIA) participates in NADP(+) binding. K(+)-binding residues include G181 and G183. The active-site Thioimidate intermediate is C186. 216 to 239 (IIGDGGCSCAGDVAKAFGGGADFV) provides a ligand contact to NADP(+).

Belongs to the IMPDH/GMPR family. GuaC type 1 subfamily. In terms of assembly, homotetramer.

It carries out the reaction IMP + NH4(+) + NADP(+) = GMP + NADPH + 2 H(+). Its function is as follows. Catalyzes the irreversible NADPH-dependent deamination of GMP to IMP. It functions in the conversion of nucleobase, nucleoside and nucleotide derivatives of G to A nucleotides, and in maintaining the intracellular balance of A and G nucleotides. The protein is GMP reductase of Vibrio campbellii (strain ATCC BAA-1116).